A 418-amino-acid chain; its full sequence is MPFLHGFRRIIFEYQPLVDAILGALGIQDLERQEPLDDSASSEESRILVLTELLEQKAHSPFYQEGVSNALLKMAELGLTRAAAVLLQSGANLNFEDPVTYYTALHIAVLRNQPDMVELLVRHGADINRRDRIHESSPLDLASEEPERLPCLQRLLDLGADVNAADKNGKTALLHALASSDGVQIHNTENIRLLLEGGADVKATTKDGDTVFTCIIFLLGETVCGDKEEAPMINRFCFQVTQLLLAHGADPSECPAHESLTHICLKSFKLHFPLLCFLLESGAAYNCSLHGASCWSGFNLVFERLCSHPGCAEDDSHIELLHKAETVLDLMVTSSQRLQLPENLNIHPVGSLAGKIQALHASLRQLESYPPPLKHLCRVSIRLCLRPWPVDTKVKALPLPDRLKWYLLSAHSDTQDTC.

ANK repeat units follow at residues 65 to 95 (EGVS…NLNF), 100 to 129 (TYYT…DINR), 134 to 164 (HESS…DVNA), 168 to 203 (NGKT…DVKA), 224 to 253 (CGDK…DPSE), and 258 to 287 (ESLT…AYNC). One can recognise an SOCS box domain in the interval 358–413 (ALHASLRQLESYPPPLKHLCRVSIRLCLRPWPVDTKVKALPLPDRLKWYLLSAHSD).

The protein belongs to the ankyrin SOCS box (ASB) family. As to quaternary structure, binds APS. Identified in a complex with ELOB and ELOC. Interacts with CUL5 and RNF7. Interacts with SQSTM1. As to expression, detected in adipocytes.

It localises to the cytoplasm. Its pathway is protein modification; protein ubiquitination. Its function is as follows. Probable substrate-recognition component of a SCF-like ECS (Elongin-Cullin-SOCS-box protein) E3 ubiquitin-protein ligase complex which mediates the ubiquitination and subsequent proteasomal degradation of target proteins. May play a role in the regulation of cell proliferation and autophagy by promoting the ubiquitination and degradation of SQSTM1. In Mus musculus (Mouse), this protein is Ankyrin repeat and SOCS box protein 6 (Asb6).